The primary structure comprises 641 residues: Pheromone-processing carboxypeptidase KEX1 (641 aa).

The N-terminal stretch at 1-34 (MRSTSTFTRTPAFLLHTLARWLLVWGVLGSSVVA) is a signal peptide. Topologically, residues 35-522 (EKKCASNYYV…KAATWAAYYK (488 aa)) are lumenal. Ser188 is a catalytic residue. Asn207 carries N-linked (GlcNAc...) asparagine glycosylation. Residue Asp389 is part of the active site. Asn440 and Asn448 each carry an N-linked (GlcNAc...) asparagine glycan. The active site involves His451. Residues 486–506 (DGEKGALTSVGNHPNSTTAEQ) are disordered. A compositionally biased stretch (polar residues) spans 494–504 (SVGNHPNSTTA). A glycan (N-linked (GlcNAc...) asparagine) is linked at Asn500. A helical membrane pass occupies residues 523 to 543 (SGEVALVVVAIAAAVWGFFIW). Topologically, residues 544-641 (RSRRQRQGSG…PSNMPSSSSS (98 aa)) are cytoplasmic. Residues 593–641 (LDTLRGTDDRSRGANGHGSVGGDSEDEDEKFGAQKESYHPSNMPSSSSS) form a disordered region. The segment covering 594–604 (DTLRGTDDRSR) has biased composition (basic and acidic residues). Residues 631-641 (HPSNMPSSSSS) are compositionally biased toward polar residues.

It belongs to the peptidase S10 family.

It is found in the golgi apparatus. The protein resides in the trans-Golgi network membrane. The catalysed reaction is Preferential release of a C-terminal arginine or lysine residue.. Its function is as follows. Protease with a carboxypeptidase B-like function involved in the C-terminal processing of the lysine and arginine residues from protein precursors. Promotes cell fusion and is involved in the programmed cell death. The chain is Pheromone-processing carboxypeptidase KEX1 (KEX1) from Coccidioides posadasii (strain C735) (Valley fever fungus).